An 83-amino-acid polypeptide reads, in one-letter code: uncharacterized protein (83 aa).

The protein belongs to the chlamydial CPn_0711/CT_665/TC_0036 family.

This is an uncharacterized protein from Chlamydia trachomatis serovar D (strain ATCC VR-885 / DSM 19411 / UW-3/Cx).